A 194-amino-acid polypeptide reads, in one-letter code: 7-methyl-GTP pyrophosphatase (194 aa).

The Proton acceptor role is filled by aspartate 70.

Belongs to the Maf family. YceF subfamily. A divalent metal cation is required as a cofactor.

The protein resides in the cytoplasm. The enzyme catalyses N(7)-methyl-GTP + H2O = N(7)-methyl-GMP + diphosphate + H(+). Nucleoside triphosphate pyrophosphatase that hydrolyzes 7-methyl-GTP (m(7)GTP). May have a dual role in cell division arrest and in preventing the incorporation of modified nucleotides into cellular nucleic acids. The sequence is that of 7-methyl-GTP pyrophosphatase from Ralstonia nicotianae (strain ATCC BAA-1114 / GMI1000) (Ralstonia solanacearum).